Reading from the N-terminus, the 277-residue chain is Large ribosomal subunit protein uL2 (277 aa).

Residues 218–277 are disordered; the sequence is PTVRGSVMNPNDHPHGGGEGKAPVGRKAPSTPWGKPALGLKTRNKKAKSDKLIVRRRNEK. Residues 264-277 are compositionally biased toward basic and acidic residues; sequence AKSDKLIVRRRNEK.

Belongs to the universal ribosomal protein uL2 family. In terms of assembly, part of the 50S ribosomal subunit. Forms a bridge to the 30S subunit in the 70S ribosome.

In terms of biological role, one of the primary rRNA binding proteins. Required for association of the 30S and 50S subunits to form the 70S ribosome, for tRNA binding and peptide bond formation. It has been suggested to have peptidyltransferase activity; this is somewhat controversial. Makes several contacts with the 16S rRNA in the 70S ribosome. This is Large ribosomal subunit protein uL2 from Streptococcus pyogenes serotype M4 (strain MGAS10750).